Here is a 216-residue protein sequence, read N- to C-terminus: 3-keto-L-gulonate-6-phosphate decarboxylase UlaD (216 aa).

D11 contributes to the substrate binding site. Positions 33 and 62 each coordinate Mg(2+). Residue R192 participates in substrate binding.

This sequence belongs to the HPS/KGPDC family. KGPDC subfamily. As to quaternary structure, homodimer. The cofactor is Mg(2+).

It carries out the reaction 3-dehydro-L-gulonate 6-phosphate + H(+) = L-xylulose 5-phosphate + CO2. Its pathway is cofactor degradation; L-ascorbate degradation; D-xylulose 5-phosphate from L-ascorbate: step 2/4. In terms of biological role, catalyzes the decarboxylation of 3-keto-L-gulonate-6-P into L-xylulose-5-P. Is involved in the anaerobic L-ascorbate utilization. In Escherichia coli O139:H28 (strain E24377A / ETEC), this protein is 3-keto-L-gulonate-6-phosphate decarboxylase UlaD.